We begin with the raw amino-acid sequence, 207 residues long: Na(+)-translocating ferredoxin:NAD(+) oxidoreductase complex subunit G (207 aa).

A helical membrane pass occupies residues 18–38 (GLILFVISAVAACALALTNYV). Thr185 is modified (FMN phosphoryl threonine).

Belongs to the RnfG family. In terms of assembly, the complex is composed of six subunits: RnfA, RnfB, RnfC, RnfD, RnfE and RnfG. FMN is required as a cofactor.

The protein localises to the cell membrane. It carries out the reaction 2 reduced [2Fe-2S]-[ferredoxin] + Na(+)(in) + NAD(+) + H(+) = 2 oxidized [2Fe-2S]-[ferredoxin] + Na(+)(out) + NADH. Part of a membrane-bound complex that couples electron transfer with translocation of ions across the membrane. Couples electron transfer from reduced ferredoxin to NAD(+) with electrogenic movement of Na(+) out of the cell. Involved in caffeate respiration. The polypeptide is Na(+)-translocating ferredoxin:NAD(+) oxidoreductase complex subunit G (Acetobacterium woodii (strain ATCC 29683 / DSM 1030 / JCM 2381 / KCTC 1655 / WB1)).